The following is a 65-amino-acid chain: Large ribosomal subunit protein uL29 (65 aa).

The protein belongs to the universal ribosomal protein uL29 family.

This Parabacteroides distasonis (strain ATCC 8503 / DSM 20701 / CIP 104284 / JCM 5825 / NCTC 11152) protein is Large ribosomal subunit protein uL29.